The following is a 666-amino-acid chain: Transketolase (666 aa).

Position 26 (His26) interacts with substrate. Thiamine diphosphate-binding positions include His66 and 114–116 (GPL). Position 155 (Asp155) interacts with Mg(2+). Residues Gly156 and Asn185 each contribute to the thiamine diphosphate site. Residues Asn185 and Ile187 each coordinate Mg(2+). The substrate site is built by His261, Arg358, and Ser385. His261 contributes to the thiamine diphosphate binding site. The active-site Proton donor is the Glu411. Phe437 serves as a coordination point for thiamine diphosphate. Substrate-binding residues include His461, Asp469, and Arg520.

Belongs to the transketolase family. In terms of assembly, homodimer. The cofactor is Mg(2+). It depends on Ca(2+) as a cofactor. Mn(2+) is required as a cofactor. Co(2+) serves as cofactor. Requires thiamine diphosphate as cofactor.

The enzyme catalyses D-sedoheptulose 7-phosphate + D-glyceraldehyde 3-phosphate = aldehydo-D-ribose 5-phosphate + D-xylulose 5-phosphate. Functionally, catalyzes the transfer of a two-carbon ketol group from a ketose donor to an aldose acceptor, via a covalent intermediate with the cofactor thiamine pyrophosphate. The protein is Transketolase (tkt) of Buchnera aphidicola subsp. Baizongia pistaciae (strain Bp).